The chain runs to 572 residues: Proline--tRNA ligase (572 aa).

It belongs to the class-II aminoacyl-tRNA synthetase family. ProS type 1 subfamily. As to quaternary structure, homodimer.

The protein localises to the cytoplasm. The enzyme catalyses tRNA(Pro) + L-proline + ATP = L-prolyl-tRNA(Pro) + AMP + diphosphate. Its function is as follows. Catalyzes the attachment of proline to tRNA(Pro) in a two-step reaction: proline is first activated by ATP to form Pro-AMP and then transferred to the acceptor end of tRNA(Pro). As ProRS can inadvertently accommodate and process non-cognate amino acids such as alanine and cysteine, to avoid such errors it has two additional distinct editing activities against alanine. One activity is designated as 'pretransfer' editing and involves the tRNA(Pro)-independent hydrolysis of activated Ala-AMP. The other activity is designated 'posttransfer' editing and involves deacylation of mischarged Ala-tRNA(Pro). The misacylated Cys-tRNA(Pro) is not edited by ProRS. This chain is Proline--tRNA ligase, found in Klebsiella pneumoniae subsp. pneumoniae (strain ATCC 700721 / MGH 78578).